Here is a 344-residue protein sequence, read N- to C-terminus: HTH-type transcriptional regulator XC_2801 (344 aa).

The region spanning 3 to 60 (HDLNDTLIFVKVVEQGSFIAAANSLGLPKTTVSRKVQELETRLGARLLHRTTRRIGLT) is the HTH lysR-type domain. The H-T-H motif DNA-binding region spans 20 to 39 (FIAAANSLGLPKTTVSRKVQ).

Belongs to the LysR transcriptional regulatory family. In terms of assembly, interacts with the cyclic di-GMP effector XC_3703.

Its activity is regulated as follows. Activity is regulated by cyclic di-GMP. Cyclic di-GMP specifically binds to XC_3703, which inhibits the interaction of the XC_2801-XC_3703 complex with DNA and prevents the transcription of the target genes. Functionally, transcriptional regulator that directly or indirectly regulates the expression of virulence-related genes, including flhB, aaeA, fliL and flgG. Binds to the promoter of the target genes only in the presence of XC_3703. The chain is HTH-type transcriptional regulator XC_2801 from Xanthomonas campestris pv. campestris (strain 8004).